A 481-amino-acid chain; its full sequence is Cysteine protease atg-4.1 (481 aa).

Cysteine 112 (nucleophile) is an active-site residue. Catalysis depends on residues aspartate 313 and histidine 315. The tract at residues 462-481 (DVHTEEEDADEDNDDDVANA) is disordered.

It belongs to the peptidase C54 family.

It localises to the cytoplasm. The enzyme catalyses [protein]-C-terminal L-amino acid-glycyl-phosphatidylethanolamide + H2O = [protein]-C-terminal L-amino acid-glycine + a 1,2-diacyl-sn-glycero-3-phosphoethanolamine. In terms of biological role, cysteine protease required for autophagy. Cleaves the C-terminal amino acid of ATG8 family proteins lgg-1, to reveal a C-terminal glycine. Exposure of the glycine at the C-terminus is essential for ATG8 proteins conjugation to phosphatidylethanolamine (PE) and insertion to membranes, which is necessary for autophagy. Its cleavage activity is functionally redundant to atg-4.2, but it cleaves lgg-1 precursors more efficiently than atg-4.2. Acts redundantly with atg-4.2 to promote the lgg-1 delipidation to release the protein from membranes, which facilitates multiple events during macroautophagy. Unlike atg-4.2 does not seem to be required for autophagosome maturation. The chain is Cysteine protease atg-4.1 from Caenorhabditis elegans.